Consider the following 226-residue polypeptide: UPF0758 protein GK2618 (226 aa).

The 123-residue stretch at 104-226 folds into the MPN domain; sequence VIRCPEDGAK…FISLKEKGYV (123 aa). Residues His-175, His-177, and Asp-188 each contribute to the Zn(2+) site. The JAMM motif motif lies at 175–188; sequence HNHPSGDPTPSRED.

It belongs to the UPF0758 family.

The sequence is that of UPF0758 protein GK2618 from Geobacillus kaustophilus (strain HTA426).